Consider the following 71-residue polypeptide: UPF0434 protein APH_0052 (71 aa).

Residues 52 to 63 show a composition bias toward basic and acidic residues; the sequence is RKLQPEEPKEGS. The interval 52–71 is disordered; the sequence is RKLQPEEPKEGSELQSSDNQ.

It belongs to the UPF0434 family.

This is UPF0434 protein APH_0052 from Anaplasma phagocytophilum (strain HZ).